Reading from the N-terminus, the 294-residue chain is N-acetylmuramic acid 6-phosphate etherase (294 aa).

The region spanning 54-217 is the SIS domain; it reads VIKSFEEEGR…STASMIGVGK (164 aa). Glu82 functions as the Proton donor in the catalytic mechanism. The active site involves Glu113.

The protein belongs to the GCKR-like family. MurNAc-6-P etherase subfamily. In terms of assembly, homodimer.

It catalyses the reaction N-acetyl-D-muramate 6-phosphate + H2O = N-acetyl-D-glucosamine 6-phosphate + (R)-lactate. It participates in amino-sugar metabolism; N-acetylmuramate degradation. Specifically catalyzes the cleavage of the D-lactyl ether substituent of MurNAc 6-phosphate, producing GlcNAc 6-phosphate and D-lactate. This is N-acetylmuramic acid 6-phosphate etherase from Bacillus cereus (strain ATCC 10987 / NRS 248).